Consider the following 254-residue polypeptide: 5-oxoprolinase subunit A (254 aa).

It belongs to the LamB/PxpA family. As to quaternary structure, forms a complex composed of PxpA, PxpB and PxpC.

It carries out the reaction 5-oxo-L-proline + ATP + 2 H2O = L-glutamate + ADP + phosphate + H(+). Catalyzes the cleavage of 5-oxoproline to form L-glutamate coupled to the hydrolysis of ATP to ADP and inorganic phosphate. This chain is 5-oxoprolinase subunit A, found in Acinetobacter baumannii (strain ACICU).